A 205-amino-acid chain; its full sequence is Holliday junction branch migration complex subunit RuvA (205 aa).

The tract at residues 1-64 (MIGRLKGILI…ENLHQLFGFA (64 aa)) is domain I. The segment at 65-143 (EQRDRSLFRT…NWDLPQGDML (79 aa)) is domain II. A flexible linker region spans residues 144 to 153 (AHGEIQAIAS). The segment at 153-205 (SDNDIYAEAESALIALGYKPVDAAKMVASAAKQKPEARSEELIRIALRSLAGV) is domain III.

Belongs to the RuvA family. In terms of assembly, homotetramer. Forms an RuvA(8)-RuvB(12)-Holliday junction (HJ) complex. HJ DNA is sandwiched between 2 RuvA tetramers; dsDNA enters through RuvA and exits via RuvB. An RuvB hexamer assembles on each DNA strand where it exits the tetramer. Each RuvB hexamer is contacted by two RuvA subunits (via domain III) on 2 adjacent RuvB subunits; this complex drives branch migration. In the full resolvosome a probable DNA-RuvA(4)-RuvB(12)-RuvC(2) complex forms which resolves the HJ.

The protein resides in the cytoplasm. Its function is as follows. The RuvA-RuvB-RuvC complex processes Holliday junction (HJ) DNA during genetic recombination and DNA repair, while the RuvA-RuvB complex plays an important role in the rescue of blocked DNA replication forks via replication fork reversal (RFR). RuvA specifically binds to HJ cruciform DNA, conferring on it an open structure. The RuvB hexamer acts as an ATP-dependent pump, pulling dsDNA into and through the RuvAB complex. HJ branch migration allows RuvC to scan DNA until it finds its consensus sequence, where it cleaves and resolves the cruciform DNA. The chain is Holliday junction branch migration complex subunit RuvA from Cellvibrio japonicus (strain Ueda107) (Pseudomonas fluorescens subsp. cellulosa).